A 190-amino-acid polypeptide reads, in one-letter code: ATP synthase subunit b (190 aa).

The chain crosses the membrane as a helical span at residues 24–44 (IVGSLICFVVILFFFWKLVLP).

This sequence belongs to the ATPase B chain family. In terms of assembly, F-type ATPases have 2 components, F(1) - the catalytic core - and F(0) - the membrane proton channel. F(1) has five subunits: alpha(3), beta(3), gamma(1), delta(1), epsilon(1). F(0) has three main subunits: a(1), b(2) and c(10-14). The alpha and beta chains form an alternating ring which encloses part of the gamma chain. F(1) is attached to F(0) by a central stalk formed by the gamma and epsilon chains, while a peripheral stalk is formed by the delta and b chains.

The protein localises to the cell membrane. Its function is as follows. F(1)F(0) ATP synthase produces ATP from ADP in the presence of a proton or sodium gradient. F-type ATPases consist of two structural domains, F(1) containing the extramembraneous catalytic core and F(0) containing the membrane proton channel, linked together by a central stalk and a peripheral stalk. During catalysis, ATP synthesis in the catalytic domain of F(1) is coupled via a rotary mechanism of the central stalk subunits to proton translocation. In terms of biological role, component of the F(0) channel, it forms part of the peripheral stalk, linking F(1) to F(0). This is ATP synthase subunit b from Leifsonia xyli subsp. xyli (strain CTCB07).